A 417-amino-acid chain; its full sequence is Serine hydroxymethyltransferase (417 aa).

(6S)-5,6,7,8-tetrahydrofolate-binding positions include L121 and 125–127; that span reads GHL. K229 is modified (N6-(pyridoxal phosphate)lysine). A (6S)-5,6,7,8-tetrahydrofolate-binding site is contributed by 355-357; the sequence is SPF.

The protein belongs to the SHMT family. Homodimer. The cofactor is pyridoxal 5'-phosphate.

It localises to the cytoplasm. The enzyme catalyses (6R)-5,10-methylene-5,6,7,8-tetrahydrofolate + glycine + H2O = (6S)-5,6,7,8-tetrahydrofolate + L-serine. The protein operates within one-carbon metabolism; tetrahydrofolate interconversion. Its pathway is amino-acid biosynthesis; glycine biosynthesis; glycine from L-serine: step 1/1. Catalyzes the reversible interconversion of serine and glycine with tetrahydrofolate (THF) serving as the one-carbon carrier. This reaction serves as the major source of one-carbon groups required for the biosynthesis of purines, thymidylate, methionine, and other important biomolecules. Also exhibits THF-independent aldolase activity toward beta-hydroxyamino acids, producing glycine and aldehydes, via a retro-aldol mechanism. This chain is Serine hydroxymethyltransferase, found in Xylella fastidiosa (strain M23).